A 509-amino-acid polypeptide reads, in one-letter code: UDP-N-acetylmuramyl-tripeptide synthetase (509 aa).

Residue 124–130 coordinates ATP; it reads GTNGKTS. Residues 164–165, serine 191, and arginine 199 each bind UDP-N-acetyl-alpha-D-muramoyl-L-alanyl-D-glutamate; that span reads TT. Lysine 231 is modified (N6-carboxylysine).

Belongs to the MurCDEF family. MurE subfamily. In terms of processing, carboxylation is probably crucial for Mg(2+) binding and, consequently, for the gamma-phosphate positioning of ATP.

Its subcellular location is the cytoplasm. Its pathway is cell wall biogenesis; peptidoglycan biosynthesis. Functionally, catalyzes the addition of an amino acid to the nucleotide precursor UDP-N-acetylmuramoyl-L-alanyl-D-glutamate (UMAG) in the biosynthesis of bacterial cell-wall peptidoglycan. The sequence is that of UDP-N-acetylmuramyl-tripeptide synthetase from Tropheryma whipplei (strain TW08/27) (Whipple's bacillus).